We begin with the raw amino-acid sequence, 255 residues long: Ditrans,polycis-undecaprenyl-diphosphate synthase ((2E,6E)-farnesyl-diphosphate specific) (255 aa).

Asp21 is a catalytic residue. Asp21 is a Mg(2+) binding site. Substrate is bound by residues 22 to 25, Trp26, Arg34, His38, and 66 to 68; these read GNGR and SSE. The active-site Proton acceptor is the Asn69. Substrate contacts are provided by residues Trp70, Arg72, Arg189, and 195 to 197; that span reads RIS. Glu208 lines the Mg(2+) pocket.

It belongs to the UPP synthase family. As to quaternary structure, homodimer. The cofactor is Mg(2+).

It catalyses the reaction 8 isopentenyl diphosphate + (2E,6E)-farnesyl diphosphate = di-trans,octa-cis-undecaprenyl diphosphate + 8 diphosphate. Its function is as follows. Catalyzes the sequential condensation of isopentenyl diphosphate (IPP) with (2E,6E)-farnesyl diphosphate (E,E-FPP) to yield (2Z,6Z,10Z,14Z,18Z,22Z,26Z,30Z,34E,38E)-undecaprenyl diphosphate (di-trans,octa-cis-UPP). UPP is the precursor of glycosyl carrier lipid in the biosynthesis of bacterial cell wall polysaccharide components such as peptidoglycan and lipopolysaccharide. The polypeptide is Ditrans,polycis-undecaprenyl-diphosphate synthase ((2E,6E)-farnesyl-diphosphate specific) (Xylella fastidiosa (strain Temecula1 / ATCC 700964)).